A 195-amino-acid polypeptide reads, in one-letter code: Peptidyl-tRNA hydrolase (195 aa).

Y17 provides a ligand contact to tRNA. H22 functions as the Proton acceptor in the catalytic mechanism. Residues Y68, N70, and N116 each coordinate tRNA.

Belongs to the PTH family. As to quaternary structure, monomer.

It is found in the cytoplasm. It catalyses the reaction an N-acyl-L-alpha-aminoacyl-tRNA + H2O = an N-acyl-L-amino acid + a tRNA + H(+). In terms of biological role, hydrolyzes ribosome-free peptidyl-tRNAs (with 1 or more amino acids incorporated), which drop off the ribosome during protein synthesis, or as a result of ribosome stalling. Functionally, catalyzes the release of premature peptidyl moieties from peptidyl-tRNA molecules trapped in stalled 50S ribosomal subunits, and thus maintains levels of free tRNAs and 50S ribosomes. This Shewanella baltica (strain OS155 / ATCC BAA-1091) protein is Peptidyl-tRNA hydrolase.